We begin with the raw amino-acid sequence, 63 residues long: Race-specific elicitor A9 (63 aa).

Residues 1–23 form the signal peptide; sequence MKLSLLSVELALLIATTLPLCWA. Residues 24–35 constitute a propeptide that is removed on maturation; the sequence is AALPVGLGVGLD. 3 disulfides stabilise this stretch: Cys-37–Cys-51, Cys-41–Cys-54, and Cys-47–Cys-61.

Functionally, this necrosis-inducing peptide induces a hypersensitive response on Cf-9 tomato genotypes. Race-specific elicitors are compounds which only induce defense responses in genotypes of host plants which are resistant to the pathogenic race that produces the elicitor, but not in susceptible genotypes. In Passalora fulva (Tomato leaf mold), this protein is Race-specific elicitor A9 (AVR9).